Here is a 361-residue protein sequence, read N- to C-terminus: Protein-glutamate methylesterase/protein-glutamine glutaminase 1 (361 aa).

A Response regulatory domain is found at 10 to 127 (KVLVVDDSAL…REGIEEKAQE (118 aa)). 4-aspartylphosphate is present on Asp61. Positions 167 to 359 (FATTDKLIAV…ASVKRWYAEN (193 aa)) constitute a CheB-type methylesterase domain. Catalysis depends on residues Ser179, His205, and Asp301.

It belongs to the CheB family. Post-translationally, phosphorylated by CheA. Phosphorylation of the N-terminal regulatory domain activates the methylesterase activity.

Its subcellular location is the cytoplasm. The catalysed reaction is [protein]-L-glutamate 5-O-methyl ester + H2O = L-glutamyl-[protein] + methanol + H(+). It carries out the reaction L-glutaminyl-[protein] + H2O = L-glutamyl-[protein] + NH4(+). In terms of biological role, involved in chemotaxis. Part of a chemotaxis signal transduction system that modulates chemotaxis in response to various stimuli. Catalyzes the demethylation of specific methylglutamate residues introduced into the chemoreceptors (methyl-accepting chemotaxis proteins or MCP) by CheR. Also mediates the irreversible deamidation of specific glutamine residues to glutamic acid. The protein is Protein-glutamate methylesterase/protein-glutamine glutaminase 1 of Hahella chejuensis (strain KCTC 2396).